The sequence spans 332 residues: N-acetyl-gamma-glutamyl-phosphate reductase (332 aa).

The active site involves cysteine 144.

This sequence belongs to the NAGSA dehydrogenase family. Type 1 subfamily.

The protein resides in the cytoplasm. It catalyses the reaction N-acetyl-L-glutamate 5-semialdehyde + phosphate + NADP(+) = N-acetyl-L-glutamyl 5-phosphate + NADPH + H(+). Its pathway is amino-acid biosynthesis; L-arginine biosynthesis; N(2)-acetyl-L-ornithine from L-glutamate: step 3/4. Its function is as follows. Catalyzes the NADPH-dependent reduction of N-acetyl-5-glutamyl phosphate to yield N-acetyl-L-glutamate 5-semialdehyde. This is N-acetyl-gamma-glutamyl-phosphate reductase from Archaeoglobus fulgidus (strain ATCC 49558 / DSM 4304 / JCM 9628 / NBRC 100126 / VC-16).